Here is an 818-residue protein sequence, read N- to C-terminus: MWKLQPTESGGESVILLAGQEYVVGRKNCEILLTNDQSISRVHAVLTVTEQAVTLKDSSKYGTFVNGEKLESGSTKTLQTGYKITFGVFQSKFSLEKECIVVCSSCVDNEGKVTLSQDIRSVGGRLVSSWTSDCTHLVMPTVKVTIKTICALLCCRPIVKPAFFSALSKAVQQKLPLPKAERFRPQIDEPSLARDDVDLSARPERKSLFKGKTFLFLSSKQMKRLSVAVSCGGGVSQLLDEGALPVSLLESSSTCVLDMISGNSQPVISPASKKWLDSVGQILHRKGLRFITESEVGLAAIHVSNQTYCNPCSSLQSESVKTNPVFASATLSQSTAVDETALAAPSQNITAYVVNTEISQDQSRMVTSGISAVGETPEKTNPTQKASTTNKPLSLGQEPSSTRIVQETVMSSESFSVVESEQKMKKGSVVSARGRVEGPVKQKAPSSGNTTLKHSPQKQTALTSFFQPSSKKRPRESSASSVQPEPKFFKKDIKDNEDDIQQSFSVNRSHKTSSEETSLGQACGTGQNSSSKKRKEPEQDTLLGAEEPTAADDLEMSLEELEFLMSDEMDEPPQTAANKKQRLESGLTSKINSEQLSNQQEVTESKGRKGEKNQQSSSSNIQSMQLDRAGPAVTNQDTQTQSKRSPPDLEAHSSANKGPSKNKTPELEEVKKEEVSFVVNSRPQNGISQTSEAVLKQEMQASTSNSGPKNDPDLPRKLLQVQFMSLTVNNSSRSRPGPLQTHNPNDKNVKRFRKKNVPGFDGLPKIIGGSDLVAHNRSKHSELEEWLRQAAEEEKLNEREETLGDDLFRYNPRPAKKR.

The region spanning 22 to 70 is the FHA domain; that stretch reads YVVGRKNCEILLTNDQSISRVHAVLTVTEQAVTLKDSSKYGTFVNGEKL. BRCT domains lie at 91–168 and 211–301; these read SKFS…SALS and GKTF…LAAI. Disordered regions lie at residues 372–716, 729–757, and 793–818; these read AVGE…DLPR, NNSSRSRPGPLQTHNPNDKNVKRFRKKNV, and EEKLNEREETLGDDLFRYNPRPAKKR. Residues 379 to 405 show a composition bias toward polar residues; sequence KTNPTQKASTTNKPLSLGQEPSSTRIV. Over residues 409 to 419 the composition is skewed to low complexity; the sequence is VMSSESFSVVE. Residues 444-469 show a composition bias toward polar residues; sequence APSSGNTTLKHSPQKQTALTSFFQPS. A Nuclear localization signal motif is present at residues 470–475; sequence SKKRPR. Over residues 515–530 the composition is skewed to polar residues; sequence EETSLGQACGTGQNSS. A compositionally biased stretch (acidic residues) spans 549-571; that stretch reads TAADDLEMSLEELEFLMSDEMDE. Residues 586–602 show a composition bias toward polar residues; sequence GLTSKINSEQLSNQQEV. The span at 603–612 shows a compositional bias: basic and acidic residues; sequence TESKGRKGEK. Residues 613–625 are compositionally biased toward low complexity; the sequence is NQQSSSSNIQSMQ. 2 stretches are compositionally biased toward polar residues: residues 633–644 and 653–662; these read VTNQDTQTQSKR and SSANKGPSKN. Residues 663 to 675 show a composition bias toward basic and acidic residues; that stretch reads KTPELEEVKKEEV. Composition is skewed to polar residues over residues 678–692 and 699–708; these read VVNSRPQNGISQTSE and MQASTSNSGP. Residues 793 to 808 are compositionally biased toward basic and acidic residues; that stretch reads EEKLNEREETLGDDLF. Residues 804-813 carry the FxF/Y motif motif; the sequence is GDDLFRYNPR.

The protein belongs to the Nibrin family. In terms of assembly, component of the MRN complex composed of two heterodimers rad50 and mre11 associated with a single nbn.

It localises to the nucleus. The protein resides in the chromosome. Its subcellular location is the PML body. The protein localises to the telomere. Its function is as follows. Component of the MRN complex, which plays a central role in double-strand break (DSB) repair, DNA recombination, maintenance of telomere integrity and meiosis. The MRN complex is involved in the repair of DNA double-strand breaks (DSBs) via homologous recombination (HR), an error-free mechanism which primarily occurs during S and G2 phases. The complex (1) mediates the end resection of damaged DNA, which generates proper single-stranded DNA, a key initial steps in HR, and is (2) required for the recruitment of other repair factors and efficient activation of ATM and ATR upon DNA damage. The MRN complex possesses single-strand endonuclease activity and double-strand-specific 3'-5' exonuclease activity, which are provided by MRE11, to initiate end resection, which is required for single-strand invasion and recombination. Within the MRN complex, nbn acts as a protein-protein adapter, which specifically recognizes and binds phosphorylated proteins, promoting their recruitment to DNA damage sites. Recruits mre11 and rad50 components of the MRN complex to DSBs in response to DNA damage. Promotes the recruitment of PI3/PI4-kinase family members atm, atr, and probably DNA-PKcs to the DNA damage sites, activating their functions. Mediates the recruitment of phosphorylated rbbp8/CtIP to DSBs, leading to cooperation between the MRN complex and rbbp8/CtIP to initiate end resection. The MRN complex and rbbp8/CtIP are also required for chromosome alignment during metaphase. The chain is Nibrin (nbn) from Danio rerio (Zebrafish).